Consider the following 292-residue polypeptide: MIAGSMVALVTPMDAQGGLDWDSLSKLVDFHLQEGTNAIVAVGTTGESATLSVAEHIEVIRRVVDQVNGRIPVIAGTGANSTSEAVELTENAKTAGADACLLVTPYYNKPTQEGLYLHFKHIAEAVAIPQILYNVPGRTVCDMLPDTVERLSKVPNIIGIKEATGDLKRGREVLDRVSTDFLVYSGDDPTAVELMLMGGKGNISVTANVAPRAMSELCAAAMAGDAETARAINERLMPLHRALFLEANPIPVKWALHEMGLMGNGIRLPLTWLSQSYQEPLRQAMRQTGVLA.

Thr-45 is a binding site for pyruvate. Tyr-133 serves as the catalytic Proton donor/acceptor. The active-site Schiff-base intermediate with substrate is the Lys-161. A pyruvate-binding site is contributed by Ile-203.

It belongs to the DapA family. In terms of assembly, homodimer.

It is found in the cytoplasm. It carries out the reaction L-aspartate 4-semialdehyde + pyruvate = (2S,4S)-4-hydroxy-2,3,4,5-tetrahydrodipicolinate + H2O + H(+). The protein operates within amino-acid biosynthesis; L-lysine biosynthesis via DAP pathway; (S)-tetrahydrodipicolinate from L-aspartate: step 3/4. In terms of biological role, catalyzes the condensation of (S)-aspartate-beta-semialdehyde [(S)-ASA] and pyruvate to 4-hydroxy-tetrahydrodipicolinate (HTPA). The chain is 4-hydroxy-tetrahydrodipicolinate synthase from Stutzerimonas stutzeri (strain A1501) (Pseudomonas stutzeri).